The primary structure comprises 768 residues: Lon protease (768 aa).

Positions 4-198 (APFLPIRDLV…RILDEIVAEM (195 aa)) constitute a Lon N-terminal domain. 349 to 356 (GPPGIGKT) serves as a coordination point for ATP. Residues 586–768 (TGKIGVVNGL…DDVSKLVFVK (183 aa)) form the Lon proteolytic domain. Catalysis depends on residues serine 674 and lysine 717.

This sequence belongs to the peptidase S16 family. In terms of assembly, homohexamer. Organized in a ring with a central cavity.

It is found in the cytoplasm. The enzyme catalyses Hydrolysis of proteins in presence of ATP.. Functionally, ATP-dependent serine protease that mediates the selective degradation of mutant and abnormal proteins as well as certain short-lived regulatory proteins. Required for cellular homeostasis and for survival from DNA damage and developmental changes induced by stress. Degrades polypeptides processively to yield small peptide fragments that are 5 to 10 amino acids long. Binds to DNA in a double-stranded, site-specific manner. The sequence is that of Lon protease from Fusobacterium nucleatum subsp. nucleatum (strain ATCC 25586 / DSM 15643 / BCRC 10681 / CIP 101130 / JCM 8532 / KCTC 2640 / LMG 13131 / VPI 4355).